A 77-amino-acid polypeptide reads, in one-letter code: Large ribosomal subunit protein eL20 (77 aa).

This sequence belongs to the eukaryotic ribosomal protein eL20 family. As to quaternary structure, part of the 50S ribosomal subunit. Binds 23S rRNA.

In Thermococcus kodakarensis (strain ATCC BAA-918 / JCM 12380 / KOD1) (Pyrococcus kodakaraensis (strain KOD1)), this protein is Large ribosomal subunit protein eL20.